Reading from the N-terminus, the 220-residue chain is Protein-methionine-sulfoxide reductase heme-binding subunit MsrQ (220 aa).

The next 6 helical transmembrane spans lie at 20-40, 51-71, 86-106, 122-142, 153-173, and 175-195; these read LWLL…LGAT, FEHL…LVTP, ALGL…MVLD, PFIT…LTSN, WSSL…HFLM, and VKSW…LLLW.

It belongs to the MsrQ family. In terms of assembly, heterodimer of a catalytic subunit (MsrP) and a heme-binding subunit (MsrQ). It depends on FMN as a cofactor. The cofactor is heme b.

It localises to the cell inner membrane. Its function is as follows. Part of the MsrPQ system that repairs oxidized periplasmic proteins containing methionine sulfoxide residues (Met-O), using respiratory chain electrons. Thus protects these proteins from oxidative-stress damage caused by reactive species of oxygen and chlorine generated by the host defense mechanisms. MsrPQ is essential for the maintenance of envelope integrity under bleach stress, rescuing a wide series of structurally unrelated periplasmic proteins from methionine oxidation. MsrQ provides electrons for reduction to the reductase catalytic subunit MsrP, using the quinone pool of the respiratory chain. The chain is Protein-methionine-sulfoxide reductase heme-binding subunit MsrQ from Brucella melitensis biotype 2 (strain ATCC 23457).